Consider the following 256-residue polypeptide: uncharacterized protein (256 aa).

3 consecutive transmembrane segments (helical) span residues 42-62, 73-93, and 108-128; these read LIALTVLSNLIIISFVLIWFF, FFTLFIPFFISLLVAIFLIFL, and WLFLWTCVFSSLPIFNLWLIV.

Its subcellular location is the cell membrane. This is an uncharacterized protein from Mycoplasma genitalium (strain ATCC 33530 / DSM 19775 / NCTC 10195 / G37) (Mycoplasmoides genitalium).